The primary structure comprises 442 residues: MENAKMNSLIAQYPLVEDLVALKETTWFNPGTTSLAEGLPYVGLTEQDVQDAHARLSRFAPYLAKAFPETAAAGGIIESELVAIPAMQKRLEKEYQQPISGQLLLKKDSHLPISGSIKARGGIYEVLAHAEKLALEAGLLTLEDDYSKLLSPEFKQFFSQYSIAVGSTGNLGLSIGIMSARIGFKVTVHMSADARAWKKAKLRSHGVTVVEYEQDYGVAVEEGRKAAQSDPNCFFIDDENSRTLFLGYSVAGQRLKAQFAQQGRIVDADNPLFVYLPCGVGGGPGGVAFGLKLAFGDHVHCFFAEPTHSPCMLLGVHTGLHDQISVQDIGIDNLTAADGLAVGRASGFVGRAMERLLDGFYTLSDQTMYDMLGWLAQEEGIRLEPSALAGMAGPQRVCASVSYQQLHGFSAEQLRNATHLVWATGGGMVPEEEMNQYLAKGR.

Lys118 bears the N6-(pyridoxal phosphate)lysine mark.

The protein belongs to the serine/threonine dehydratase family. DsdA subfamily. In terms of assembly, monomer. Requires pyridoxal 5'-phosphate as cofactor.

The enzyme catalyses D-serine = pyruvate + NH4(+). The chain is D-serine dehydratase from Escherichia coli O81 (strain ED1a).